Here is a 437-residue protein sequence, read N- to C-terminus: Enolase 2 (437 aa).

Residue Lys-60 forms a Glycyl lysine isopeptide (Lys-Gly) (interchain with G-Cter in ubiquitin) linkage. Ser-138 carries the post-translational modification Phosphoserine. His-160 is an active-site residue. Position 188 is a phosphoserine (Ser-188). Lys-243 participates in a covalent cross-link: Glycyl lysine isopeptide (Lys-Gly) (interchain with G-Cter in ubiquitin). Asp-247 and Glu-296 together coordinate Mg(2+). Thr-313 is modified (phosphothreonine). Residue Asp-321 participates in Mg(2+) binding. Phosphothreonine is present on Thr-324. Lys-358 is covalently cross-linked (Glycyl lysine isopeptide (Lys-Gly) (interchain with G-Cter in ubiquitin)).

The protein belongs to the enolase family. In terms of assembly, homodimer. The cofactor is Mg(2+).

The protein resides in the cytoplasm. The enzyme catalyses (2R)-2-phosphoglycerate = phosphoenolpyruvate + H2O. The protein operates within carbohydrate degradation; glycolysis; pyruvate from D-glyceraldehyde 3-phosphate: step 4/5. In Saccharomyces cerevisiae (strain ATCC 204508 / S288c) (Baker's yeast), this protein is Enolase 2 (ENO2).